A 724-amino-acid polypeptide reads, in one-letter code: Small conductance calcium-activated potassium channel protein 3 (724 aa).

Over residues 1–11 the composition is skewed to basic and acidic residues; it reads MDTSGHFHDSG. Disordered stretches follow at residues 1–161 and 232–251; these read MDTS…RDSN and ATHNHQHAGTTASSTTFPKA. Over residues 34 to 58 the composition is skewed to pro residues; the sequence is QPPPPPPPPAPPAAPQQPPGPPLQP. Over residues 59–88 the composition is skewed to low complexity; sequence QPLQLQQQQQQQQQQPPHPLSQLAQLQSQP. Residues 105–125 show a composition bias toward polar residues; that stretch reads PSSNSTAILHPSSRQGSQLNL. Residues 131-140 are compositionally biased toward low complexity; sequence GHSPSSTATS. S160 bears the Phosphoserine mark. The segment covering 232–249 has biased composition (polar residues); that stretch reads ATHNHQHAGTTASSTTFP. A helical membrane pass occupies residues 281-301; it reads LIFGMFGIVVMVIETELSWGL. A helical transmembrane segment spans residues 308–328; sequence FSLALKCLISLSTIILLGLII. Residues 359–379 traverse the membrane as a helical segment; sequence ISLEMLVCAIHPIPGEYKFFW. A helical transmembrane segment spans residues 398–418; sequence IILSIPMFLRLYLIARVMLLH. A helical membrane pass occupies residues 447 to 467; that stretch reads LMTICPGTVLLVFSISLWIIA. An intramembrane region (pore-forming) is located at residues 487–507; it reads FLGAMWLISITFLSIGYGDMV. The chain crosses the membrane as a helical span at residues 516 to 536; sequence VCLLTGIMGAGCTALVVAVVA. The calmodulin-binding stretch occupies residues 554-630; that stretch reads DTQLTKRIKN…LVDLSKMQNV (77 aa). The stretch at 635-662 forms a coiled coil; the sequence is ITELNDRSEDLEKQIGSLESKLEHLTAS. The interval 702–724 is disordered; that stretch reads LSDSPIGVSSTSFPTPYTSSSSC. Residues 710–724 are compositionally biased toward low complexity; it reads SSTSFPTPYTSSSSC.

It belongs to the potassium channel KCNN family. KCa2.3/KCNN3 subfamily. Homodimer. Heteromultimer with KCNN2 or KCNN1; this modulates plasma membrane expression and consequently the small conductance calcium-activated potassium channel activity. The complex is composed of 4 channel subunits each of which binds to a calmodulin subunit which regulates the channel activity through calcium-binding. Interacts with CALM1.

Its subcellular location is the cell membrane. The protein localises to the cytoplasm. It is found in the myofibril. It localises to the sarcomere. The protein resides in the z line. It carries out the reaction K(+)(in) = K(+)(out). With respect to regulation, inhibited by bee venom neurotoxin apamin. Small conductance calcium-activated potassium channel that mediates the voltage-independent transmembrane transfer of potassium across the cell membrane through a constitutive interaction with calmodulin which binds the intracellular calcium allowing its opening. The current is characterized by a voltage-independent activation, an intracellular calcium concentration increase-dependent activation and a single-channel conductance of 10 picosiemens. Also presents an inwardly rectifying current, thus reducing its already small outward conductance of potassium ions, which is particularly the case when the membrane potential displays positive values, above + 20 mV. Activation is followed by membrane hyperpolarization. Thought to regulate neuronal excitability by contributing to the slow component of synaptic afterhyperpolarization. The chain is Small conductance calcium-activated potassium channel protein 3 from Sus scrofa (Pig).